The primary structure comprises 196 residues: Small ribosomal subunit protein uS4c (196 aa).

One can recognise an S4 RNA-binding domain in the interval 82-143 (MRLDNILFRL…KQKSKALIQN (62 aa)).

This sequence belongs to the universal ribosomal protein uS4 family. As to quaternary structure, part of the 30S ribosomal subunit. Contacts protein S5. The interaction surface between S4 and S5 is involved in control of translational fidelity.

The protein localises to the plastid. Its subcellular location is the chloroplast. One of the primary rRNA binding proteins, it binds directly to 16S rRNA where it nucleates assembly of the body of the 30S subunit. Functionally, with S5 and S12 plays an important role in translational accuracy. The protein is Small ribosomal subunit protein uS4c (rps4) of Patersonia sp. (strain Lejeune 1997).